The following is a 726-amino-acid chain: MSMSEETNNSLSSGKCPFHHGGSDQSAGEGTGSRDWWPKQLRVELLNQHSNRSNPLGEDFDYRKEFSKLDYSALKGDIKALLTDSQSWWPADWGSYVGLFIRMAWHGAGTYRSVDGRGGAGRGQQRFAPLNAWPDNVSLDKARRLLWPIKQKYGQKISWADLYILAGNVALENSGFRTFGFGAGREDVWEPDMDVNWGDEKAWLTHRDPESLAKRPLAATEMGLIYVNPEGPNASGEPLSAAAAIRATFGNMGMNDEETVALIAGGHTLGKTHGAAAATHVGVDPEGSLIESQGLGWTSTHGTGVGADAITSGLEVVWSQTPTQWSNYFFENLFKYEWVQTRSPAGAIQFEAVDAPEIIPDPFDPSKKRKPTMLVTDLTLRFDPEFEKISRRFLNDPQAFNEAFARAWYKLTHRDMGPKARYIGPEVPKEDLIWQDPLPQAVFNPSQEDIASLKAEIVASGLSVSELVSVAWASASTFRGGDKRGGANGARLALAPQRDWDVNAAAVRALPTLEAIQRTTNKASLADIIVLAGVVGVEQAAKAAGVYITVPFTPGRVDARQDQTDIEMFNLLEPIADGFRNYRAQVDVSTTESLLIDKAQQLTLTAPELTALVGGMRVLGANFDGSQNGVFTDRVGVLTTDFFVNLLDMGTQWKATDESNELFAGSDRASGEVKYTATRADLVFGSNAVLRALAEVYASQDASEKFVKDFVAAWTKVMNLDRFDVK.

The segment covering 1-13 (MSMSEETNNSLSS) has biased composition (polar residues). The interval 1-34 (MSMSEETNNSLSSGKCPFHHGGSDQSAGEGTGSR) is disordered. The tryptophyl-tyrosyl-methioninium (Trp-Tyr) (with M-252) cross-link spans 105–226 (WHGAGTYRSV…LAATEMGLIY (122 aa)). The active-site Proton acceptor is H106. The segment at residues 226-252 (YVNPEGPNASGEPLSAAAAIRATFGNM) is a cross-link (tryptophyl-tyrosyl-methioninium (Tyr-Met) (with W-105)). Residue H267 participates in heme b binding.

This sequence belongs to the peroxidase family. Peroxidase/catalase subfamily. In terms of assembly, homodimer or homotetramer. Requires heme b as cofactor. Post-translationally, formation of the three residue Trp-Tyr-Met cross-link is important for the catalase, but not the peroxidase activity of the enzyme.

The catalysed reaction is H2O2 + AH2 = A + 2 H2O. It catalyses the reaction 2 H2O2 = O2 + 2 H2O. Its function is as follows. Bifunctional enzyme with both catalase and broad-spectrum peroxidase activity. The polypeptide is Catalase-peroxidase (Enterobacter sp. (strain 638)).